The following is a 337-amino-acid chain: MIQKNWQELIKPNKVDFITHGSRTHATVVAEPLERGFGLTLGNALRRVLLSSLRGAAVTAVQIDGVLHEFSSIPGVREDVTDIVLNIKEIAIRMEGEGPKRMVVRKEGPGVVTAGDIQTVGDVEILNPEHVICTLDEGAEIRMEFTVNTGKGYVPADRNRAEDAPIGLIPVDSLYSPVRKVSYKIENTREGQVLDYDKLTLNIETNGSVTGEDAVAYAARILQDQLSIFVNFEEPQKEAPQEQVAELAFNPALLKKVDELELSVRSANCLKTDNIVYIGDLIQKTEAEMLRTPNFGRKSLNEIKEVLASMGLHLGMEIPAWPPENIEDLAKRYEDQY.

Positions 1–233 are alpha N-terminal domain (alpha-NTD); it reads MIQKNWQELI…DQLSIFVNFE (233 aa). The interval 249–337 is alpha C-terminal domain (alpha-CTD); it reads FNPALLKKVD…DLAKRYEDQY (89 aa).

It belongs to the RNA polymerase alpha chain family. In terms of assembly, homodimer. The RNAP catalytic core consists of 2 alpha, 1 beta, 1 beta' and 1 omega subunit. When a sigma factor is associated with the core the holoenzyme is formed, which can initiate transcription.

The catalysed reaction is RNA(n) + a ribonucleoside 5'-triphosphate = RNA(n+1) + diphosphate. DNA-dependent RNA polymerase catalyzes the transcription of DNA into RNA using the four ribonucleoside triphosphates as substrates. The sequence is that of DNA-directed RNA polymerase subunit alpha from Brucella suis (strain ATCC 23445 / NCTC 10510).